The chain runs to 229 residues: UPF0758 protein CA_C1241 (229 aa).

The MPN domain maps to 107 to 229 (KITSPKEAAN…YISLKEEGLL (123 aa)). Residues His178, His180, and Asp191 each coordinate Zn(2+). The short motif at 178-191 (HNHPSGDPKPSNED) is the JAMM motif element.

Belongs to the UPF0758 family.

The polypeptide is UPF0758 protein CA_C1241 (Clostridium acetobutylicum (strain ATCC 824 / DSM 792 / JCM 1419 / IAM 19013 / LMG 5710 / NBRC 13948 / NRRL B-527 / VKM B-1787 / 2291 / W)).